Consider the following 827-residue polypeptide: ADP-ribosylation factor GTPase-activating protein AGD3 (827 aa).

Positions 1-225 (MHFTKLDDSP…INQVLTYAQQ (225 aa)) constitute a BAR domain. Coiled-coil stretches lie at residues 116-139 (HEVK…REKF) and 223-253 (AQQS…RESR). A disordered region spans residues 246–269 (RQVDRESRWGSNGSNGSPNGDGIQ). The segment covering 255–267 (GSNGSNGSPNGDG) has biased composition (low complexity). One can recognise a PH domain in the interval 292–430 (QTIRQGYLSK…WIEKITGVIA (139 aa)). The interval 439–467 (EQRLPGSPMGSGHHRSASESSSYESSEYD) is disordered. Position 445 is a phosphoserine (Ser-445). Residues 501 to 643 (EKPIDALRKV…LFVRRSRDSD (143 aa)) form the Arf-GAP domain. Residues 516–539 (CADCGAPEPDWASLNLGVLVCIEC) form a C4-type zinc finger. ANK repeat units lie at residues 728–757 (GGSS…NVNA), 761–790 (SGQT…DPEA), and 794–825 (EGKT…YNHR).

In terms of assembly, homodimer. Interacts with DRP1A. Interacts with VAB. As to expression, broadly expressed. Detected in developing veins of the leaf and root. Detected in roots, hypocotyls, cotyledons, leaves, siliques and shoot apical meristems.

The protein localises to the golgi apparatus. The protein resides in the trans-Golgi network. ARF GAP activity strongly enhanced by phosphatidylinositol 4-monophosphate (PIP) and moderately enhanced by phosphatidylinositol 4,5-bisphosphate (PIP2). Functionally, GTPase-activating protein (GAP) for ADP ribosylation factor (ARF). Involved in the spatial control of provascular differentiation. Required for the formation of the normal pattern of continuous secondary veins. Involved in auxin signaling but not in polar auxin transport or in auxin responses. Required for PIN1 internalization in roots. The protein is ADP-ribosylation factor GTPase-activating protein AGD3 (AGD3) of Arabidopsis thaliana (Mouse-ear cress).